The primary structure comprises 590 residues: Aspartate--tRNA ligase (590 aa).

Glu172 contacts L-aspartate. The tract at residues 196-199 (QLFK) is aspartate. Arg218 is an L-aspartate binding site. Residues 218–220 (RDE) and Gln227 contribute to the ATP site. His449 is an L-aspartate binding site. Residue Glu483 participates in ATP binding. Arg490 contributes to the L-aspartate binding site. 535–538 (GLDR) provides a ligand contact to ATP.

The protein belongs to the class-II aminoacyl-tRNA synthetase family. Type 1 subfamily. In terms of assembly, homodimer.

It is found in the cytoplasm. It carries out the reaction tRNA(Asp) + L-aspartate + ATP = L-aspartyl-tRNA(Asp) + AMP + diphosphate. Functionally, catalyzes the attachment of L-aspartate to tRNA(Asp) in a two-step reaction: L-aspartate is first activated by ATP to form Asp-AMP and then transferred to the acceptor end of tRNA(Asp). The chain is Aspartate--tRNA ligase from Glaesserella parasuis serovar 5 (strain SH0165) (Haemophilus parasuis).